The primary structure comprises 520 residues: O-methyltransferase cicE (520 aa).

Residues 300-301 (GG), D323, 355-356 (NF), and R371 contribute to the S-adenosyl-L-methionine site.

Belongs to the class I-like SAM-binding methyltransferase superfamily. Cation-independent O-methyltransferase family.

Its pathway is phytotoxin biosynthesis. Functionally, O-methyltransferase; part of the gene cluster that mediates the biosynthesis of cichorine, a phytotoxin active against knapweed, corn, and soybeans. The first step in the pathway is performed by the non-reducing polyketide synthase pkbA that condenses one acetyl-CoA starter unit with 3 malonyl-CoA units. PkbA also catalyzes one methylation step to produce 3-methylorsellinate. The nonribosomal peptide synthase-like protein cicB, the cytochrome P450 monooxygenase cicH and the O-methyltransferase cicE are involved in the conversion of 3-methylorsellinate into nidulol. CicB converts 3-methylorsellinate to a yet unidentified intermediate, cicH may play a ring-closing role for cichorine and cicE is plausibly responsible for the methylation of one of the phenol groups. The oxidoreductase cicC acts downstream with still unidentified enzymes to further convert nidulol into cichorine. The polypeptide is O-methyltransferase cicE (Emericella nidulans (strain FGSC A4 / ATCC 38163 / CBS 112.46 / NRRL 194 / M139) (Aspergillus nidulans)).